The chain runs to 189 residues: Penicillin-binding protein activator LpoB (189 aa).

Positions 1-16 (MRRILFVALSVMFLAG) are cleaved as a signal peptide. The N-palmitoyl cysteine moiety is linked to residue Cys17. Cys17 is lipidated: S-diacylglycerol cysteine. The disordered stretch occupies residues 18–52 (PSLPPEQPEPPTPVVPVTPSEKPTPPSEKVPEPPK). The segment covering 19–45 (SLPPEQPEPPTPVVPVTPSEKPTPPSE) has biased composition (pro residues).

This sequence belongs to the LpoB family. Interacts with PBP1b.

It localises to the cell outer membrane. In terms of biological role, regulator of peptidoglycan synthesis that is essential for the function of penicillin-binding protein 1B (PBP1b). This Photorhabdus laumondii subsp. laumondii (strain DSM 15139 / CIP 105565 / TT01) (Photorhabdus luminescens subsp. laumondii) protein is Penicillin-binding protein activator LpoB.